The sequence spans 292 residues: GTP cyclohydrolase FolE2 (292 aa).

The protein belongs to the GTP cyclohydrolase IV family.

The enzyme catalyses GTP + H2O = 7,8-dihydroneopterin 3'-triphosphate + formate + H(+). Its pathway is cofactor biosynthesis; 7,8-dihydroneopterin triphosphate biosynthesis; 7,8-dihydroneopterin triphosphate from GTP: step 1/1. Converts GTP to 7,8-dihydroneopterin triphosphate. The protein is GTP cyclohydrolase FolE2 of Staphylococcus epidermidis (strain ATCC 35984 / DSM 28319 / BCRC 17069 / CCUG 31568 / BM 3577 / RP62A).